The following is a 254-amino-acid chain: Acetylglutamate kinase (254 aa).

Residues 40–41, Arg-62, and Asn-154 contribute to the substrate site; that span reads GG. Residues 177–182 and 205–207 contribute to the ATP site; these read DVSGIL and IIT.

Belongs to the acetylglutamate kinase family. ArgB subfamily. In terms of assembly, homodimer.

Its subcellular location is the cytoplasm. It carries out the reaction N-acetyl-L-glutamate + ATP = N-acetyl-L-glutamyl 5-phosphate + ADP. It functions in the pathway amino-acid biosynthesis; L-arginine biosynthesis; N(2)-acetyl-L-ornithine from L-glutamate: step 2/4. Functionally, catalyzes the ATP-dependent phosphorylation of N-acetyl-L-glutamate. This is Acetylglutamate kinase from Yersinia enterocolitica serotype O:8 / biotype 1B (strain NCTC 13174 / 8081).